A 276-amino-acid polypeptide reads, in one-letter code: L-aminoadipate-semialdehyde dehydrogenase-phosphopantetheinyl transferase (276 aa).

This sequence belongs to the P-Pant transferase superfamily. AcpS family.

It carries out the reaction apo-[ACP] + CoA = holo-[ACP] + adenosine 3',5'-bisphosphate + H(+). In terms of biological role, catalyzes the transfer of a 4'-phosphopantetheine moiety from coenzyme A to a serine residue of acceptor proteins, such as alpha-aminoadipate reductase. Necessary for alpha-aminoadipate reductase activity. This Eremothecium gossypii (strain ATCC 10895 / CBS 109.51 / FGSC 9923 / NRRL Y-1056) (Yeast) protein is L-aminoadipate-semialdehyde dehydrogenase-phosphopantetheinyl transferase (LYS5).